We begin with the raw amino-acid sequence, 716 residues long: Beta-galactosidase (716 aa).

Residue Glu389 is the Proton donor of the active site. Catalysis depends on Glu462, which acts as the Nucleophile.

The protein belongs to the glycosyl hydrolase 2 family. Homodimer.

The catalysed reaction is Hydrolysis of terminal non-reducing beta-D-galactose residues in beta-D-galactosides.. Displays beta-galactosidase activity with the artificial chromogenic substrate o-nitrophenyl-beta-D-galactopyranoside (ONPG). The polypeptide is Beta-galactosidase (Thermoanaerobacterium thermosulfurigenes (Clostridium thermosulfurogenes)).